A 72-amino-acid polypeptide reads, in one-letter code: Large ribosomal subunit protein eL40 (72 aa).

Belongs to the eukaryotic ribosomal protein eL40 family.

The protein is Large ribosomal subunit protein eL40 of Nicotiana tabacum (Common tobacco).